Reading from the N-terminus, the 264-residue chain is NADH-quinone oxidoreductase subunit I 2 (264 aa).

2 4Fe-4S ferredoxin-type domains span residues 57-86 and 98-127; these read GFLE…ISLE and TQFD…HTRE. The [4Fe-4S] cluster site is built by Cys-66, Cys-69, Cys-72, Cys-76, Cys-107, Cys-110, Cys-113, and Cys-117. Positions 183-264 are disordered; the sequence is APQFLPPEPP…AAPAANPESK (82 aa). Over residues 197-264 the composition is skewed to low complexity; sequence AKPAAKAAPA…AAPAANPESK (68 aa).

Belongs to the complex I 23 kDa subunit family. In terms of assembly, NDH-1 is composed of 14 different subunits. Subunits NuoA, H, J, K, L, M, N constitute the membrane sector of the complex. Requires [4Fe-4S] cluster as cofactor.

Its subcellular location is the cell inner membrane. The catalysed reaction is a quinone + NADH + 5 H(+)(in) = a quinol + NAD(+) + 4 H(+)(out). Functionally, NDH-1 shuttles electrons from NADH, via FMN and iron-sulfur (Fe-S) centers, to quinones in the respiratory chain. The immediate electron acceptor for the enzyme in this species is believed to be ubiquinone. Couples the redox reaction to proton translocation (for every two electrons transferred, four hydrogen ions are translocated across the cytoplasmic membrane), and thus conserves the redox energy in a proton gradient. The sequence is that of NADH-quinone oxidoreductase subunit I 2 from Anaeromyxobacter dehalogenans (strain 2CP-C).